A 290-amino-acid polypeptide reads, in one-letter code: Ribosomal RNA small subunit methyltransferase A (290 aa).

6 residues coordinate S-adenosyl-L-methionine: N27, L29, G54, E75, D100, and N125.

Belongs to the class I-like SAM-binding methyltransferase superfamily. rRNA adenine N(6)-methyltransferase family. RsmA subfamily.

It localises to the cytoplasm. It carries out the reaction adenosine(1518)/adenosine(1519) in 16S rRNA + 4 S-adenosyl-L-methionine = N(6)-dimethyladenosine(1518)/N(6)-dimethyladenosine(1519) in 16S rRNA + 4 S-adenosyl-L-homocysteine + 4 H(+). Its function is as follows. Specifically dimethylates two adjacent adenosines (A1518 and A1519) in the loop of a conserved hairpin near the 3'-end of 16S rRNA in the 30S particle. May play a critical role in biogenesis of 30S subunits. This chain is Ribosomal RNA small subunit methyltransferase A, found in Streptococcus pneumoniae (strain ATCC BAA-255 / R6).